The primary structure comprises 273 residues: Thioredoxin-like 1-3, chloroplastic (273 aa).

A chloroplast-targeting transit peptide spans 1 to 44 (MATDSFIKLNPISFNRARFDLRDFAGISPKSISSLCCISPRLIS). In terms of domain architecture, Thioredoxin spans 62–202 (LFSKKKIPAF…FKEALEKHGR (141 aa)). Catalysis depends on nucleophile residues Cys-125 and Cys-128. An intrachain disulfide couples Cys-125 to Cys-128.

It belongs to the thioredoxin family.

Its subcellular location is the plastid. The protein localises to the chloroplast. Its function is as follows. Probable thiol-disulfide oxidoreductase that may participate in various redox reactions. The sequence is that of Thioredoxin-like 1-3, chloroplastic from Arabidopsis thaliana (Mouse-ear cress).